A 1005-amino-acid polypeptide reads, in one-letter code: MASAGPTGAGARPPKAFTAQAGLAKLVNPAGLNSILARGKEKFGGTQAWKELMGCDVIFARSISHWYGIKGTTYYELTVALGQPLYKPVTDPELTEEEKAVMTAVQSRFAQSNSSVVLTRTLLNKTCELKDRIRELTDELGQTEVHLAREKVKAAALKLENRKLFVENQELKDQLEKERTKHGWKGLKTLCLWIFLATLIGGYITGSNAACTLVDVPSPMKVGYDTFKQMCIHKDSYLPDGAFDKESLALECSKQMDYMDCKEVITDSISGKTSFAGMLRDVFRVDEIVTAIRTVVRFAMDFSLAYPICVMFVLILTRNKKHAIISACCALVAKCCGLRLLPFTLVLTYAPSETAIAGCIYGLGYISIPLVTFLHWVGLVLKAILVPDDCYIGTRVSHALAWSIMLPMWIITQELMAFTEFPLELQIVTTVVVCTAGFGFRYLTGTVTITEPDGTVKKYKRIFNAKSAIGTISTVFFEKAKAIRGVIPSFPSKADNIVKIEVDVDGGSAGVGFRLGNYIYTAGHVVGEAKIAKITWKGLTSQAKVLGHIELPLFTDTLARLEIPKPFQQLPVFRLAKSSENDYVQMVCFDNQLQNVVTFSGWANIDGDYLNAPFETYAGTSGSPIINRDGRMLGVHFGSNAVVSQGFVITRLFATEPAVKQCKSDEDLADEIVRKVMGGIRISFASLTSELEKQRDELNALKQMVNDLIDTDLVALEKKKGKTKRTVRGQKHKTKAISKAAFMKTKVLTEEEYRRLEEEGFTKDEIKDIVDNLREQAWLDYQNQLDEEGDDDWYEQMEEDQRINDQIDQNIERDLEDRGEWYGQRKITFKQRAMLRFIQLGRQQQVATVSFPDGYEDRAEELYNKVVTTEDLPEGETSEAALSLPNKIVHQAGKRLNFKHVKIHPDKTFMKSGVTQIEEKPEGDIILKAKTTTLAPKEEPVIQQVEQQPQVEQQQQPQQPVVEEKKRTPPPKPQRKPKTGAKAKCLDCGETFVERQDFHVCKSKN.

A run of 4 helical transmembrane segments spans residues 239–259 (PDGA…MDYM), 286–306 (DEIV…SLAY), 313–333 (VLIL…ALVA), and 344–364 (TLVL…YGLG). Catalysis depends on charge relay system; for serine protease activity residues H524, D556, and S621. Y753 is modified (O-(5'-phospho-RNA)-tyrosine). The interval 940-984 (PVIQQVEQQPQVEQQQQPQQPVVEEKKRTPPPKPQRKPKTGAKAK) is disordered. Residues 941–961 (VIQQVEQQPQVEQQQQPQQPV) show a composition bias toward low complexity.

This sequence belongs to the astroviridae polyprotein 1A family. As to quaternary structure, monomer. In terms of processing, cleaved by the viral and host proteases. The protease is probably autocatalytically cleaved.

The protein localises to the host membrane. The enzyme catalyses RNA(n) + a ribonucleoside 5'-triphosphate = RNA(n+1) + diphosphate. Responsible for the cleavage of the polyprotein into functional products. In terms of biological role, protein covalently attached to the 5' extremity of the genomic and subgenomic RNAs. It may serve as a primer for the replicase. The sequence is that of Non-structural polyprotein 1A (ORF1) from Avian nephritis virus 1 (ANV-1).